Here is a 493-residue protein sequence, read N- to C-terminus: Hexokinase (493 aa).

Residues 27 to 481 (EELSWRINKF…SGKGAAITAA (455 aa)) form the Hexokinase domain. Residues 91-239 (TGQEKGTYYA…AIPAKVCCVL (149 aa)) form a hexokinase small subdomain region. Residue 102–107 (DFGGTN) coordinates ATP. A glucose-binding region spans residues 177-203 (SVGFTFSFPCTSPSINCSILIDWTKGF). Positions 240 to 470 (NDAVGTLMSC…ENLIIIPADD (231 aa)) are hexokinase large subdomain.

It belongs to the hexokinase family.

The catalysed reaction is a D-hexose + ATP = a D-hexose 6-phosphate + ADP + H(+). The enzyme catalyses D-mannose + ATP = D-mannose 6-phosphate + ADP + H(+). It catalyses the reaction D-fructose + ATP = D-fructose 6-phosphate + ADP + H(+). It carries out the reaction D-glucose + ATP = D-glucose 6-phosphate + ADP + H(+). The protein operates within carbohydrate metabolism; hexose metabolism. Its pathway is carbohydrate degradation; glycolysis; D-glyceraldehyde 3-phosphate and glycerone phosphate from D-glucose: step 1/4. Functionally, catalyzes the phosphorylation of various hexoses to hexose 6-phosphate. The polypeptide is Hexokinase (HK) (Plasmodium falciparum).